The primary structure comprises 91 residues: Large ribosomal subunit protein bL27 (91 aa).

The protein belongs to the bacterial ribosomal protein bL27 family.

The polypeptide is Large ribosomal subunit protein bL27 (Chromobacterium violaceum (strain ATCC 12472 / DSM 30191 / JCM 1249 / CCUG 213 / NBRC 12614 / NCIMB 9131 / NCTC 9757 / MK)).